The primary structure comprises 349 residues: S-adenosylmethionine:tRNA ribosyltransferase-isomerase (349 aa).

Belongs to the QueA family. As to quaternary structure, monomer.

It is found in the cytoplasm. The enzyme catalyses 7-aminomethyl-7-carbaguanosine(34) in tRNA + S-adenosyl-L-methionine = epoxyqueuosine(34) in tRNA + adenine + L-methionine + 2 H(+). It functions in the pathway tRNA modification; tRNA-queuosine biosynthesis. Its function is as follows. Transfers and isomerizes the ribose moiety from AdoMet to the 7-aminomethyl group of 7-deazaguanine (preQ1-tRNA) to give epoxyqueuosine (oQ-tRNA). The polypeptide is S-adenosylmethionine:tRNA ribosyltransferase-isomerase (Ruegeria pomeroyi (strain ATCC 700808 / DSM 15171 / DSS-3) (Silicibacter pomeroyi)).